Reading from the N-terminus, the 427-residue chain is Protein TIFY 6a (427 aa).

Residues 1–25 show a composition bias toward basic and acidic residues; that stretch reads MERDFLGAIGRKEEAAGKPEEHSDY. The tract at residues 1-33 is disordered; it reads MERDFLGAIGRKEEAAGKPEEHSDYRGGGGGAS. Residues 196-231 enclose the Tify domain; the sequence is QNPKVTQMTIFYDGLVNVFDNIPVEKAQELMLLASR. Polar residues-rich tracts occupy residues 293-303 and 317-327; these read LPKSSSSSNDS and PLSQASPSQPI. The interval 293–327 is disordered; sequence LPKSSSSSNDSAGPKSGGLPLAVTPLSQASPSQPI. The Jas motif lies at 343–367; sequence PQARKASLARFLEKRKERVSSVAPY. Positions 345-352 match the Nuclear localization signal motif; that stretch reads ARKASLAR. The interval 360–427 is disordered; the sequence is RVSSVAPYPS…QEPPSTKLQI (68 aa). Polar residues-rich tracts occupy residues 369-402 and 411-427; these read SSKSPLESSDTIGSPSTPSKSSCTDITPSTNNCE and RNISFSSQEPPSTKLQI.

The protein belongs to the TIFY/JAZ family. In terms of processing, ubiquitinated.

Its subcellular location is the nucleus. Functionally, repressor of jasmonate responses. This is Protein TIFY 6a from Oryza sativa subsp. indica (Rice).